The chain runs to 474 residues: Mercuric reductase (474 aa).

Residues Ala-19, Gly-39, and Thr-44 each coordinate FAD. Cys-45 and Cys-50 are oxidised to a cystine. Lys-54, Ala-119, Asp-315, and Val-323 together coordinate FAD. Residues Cys-471 and Cys-472 each contribute to the Hg(2+) site.

It belongs to the class-I pyridine nucleotide-disulfide oxidoreductase family. Homodimer. FAD is required as a cofactor.

It carries out the reaction Hg + NADP(+) + H(+) = Hg(2+) + NADPH. In terms of biological role, resistance to Hg(2+) in bacteria appears to be governed by a specialized system which includes mercuric reductase. MerA protein is responsible for volatilizing mercury as Hg(0). The sequence is that of Mercuric reductase (merA) from Streptomyces lividans.